Reading from the N-terminus, the 345-residue chain is N-malonyltransferase FDB2 (345 aa).

Cys110 serves as the catalytic Acyl-thioester intermediate. His158 acts as the Proton acceptor in catalysis. The active site involves Asp173.

Belongs to the arylamine N-acetyltransferase family.

It functions in the pathway xenobiotic degradation. N-malonyltransferase; part of the Fusarium detoxification of benzoxazolinone cluster 2 (FDB2) involved in the degradation of benzoxazolinones produced by the host plant. Maize, wheat, and rye produce the 2 benzoxazinone phytoanticipins 2,4-dihy-droxy-7-methoxy-1,4-benzoxazin-3-one (DIMBOA) and 2,4-dihydroxy-1,4-benzoxazin-3-one (DIBOA) that, due to their inherent instability once released, spontaneously degrade to the more stable corresponding benzoxazolinones, 6-methoxy-2-benzoxazolinone (MBOA) and 2-benzoxazolinone (BOA), respectively. The first step in the detoxification of benzoxazolinones involves the hydrolysis of the cyclic ester bond of benzoxazolinones by the FDB1 cluster gamma-lactamase MBL1 to aminophenols. MBL1 is able to convert BOA into 2-aminophenol (2-AP), as well as MBOA into 5-methoxy-2-aminophenol (2-AMP). The FDB2 cluster N-malonyltransferase FDB2/NAT1 then metabolizes aminophenols via N-malonylation to non-toxic malonamic acids. FDB2/NAT1 converts 2-AP into N-(2-hydroxyphenyl) malonamic acid (HPMA) and 2-AMP into N-(2-hydroxy-4-methoxyphenyl) malonamic acid (HMPMA). The duplicated dienlactone hydrolases DLH1 and DLH2 may provide redundant function for hydrolyzing the lactone moiety in the BOA molecule. The roles of the amidases an other enzymes encoded by the 2 FDB clusters have not been identified so far. The protein is N-malonyltransferase FDB2 of Gibberella moniliformis (strain M3125 / FGSC 7600) (Maize ear and stalk rot fungus).